Reading from the N-terminus, the 291-residue chain is MDMGFHENEQNQEFANLMEIGSGHYGCSHYRRRCKIRAPCCDEIFDCRHCHNEAKDSLHIEQHHRHELPRHEVSKVICSLCETEQDVQQNCSNCGVCMGKYFCSKCKFFDDDLSKKQYHCDECGICRTGGEENFFHCKRCRCCYSKIMEDKHQCVEGAMHHNCPVCFEYLFDSTRDITVLRCGHTMHLECTKDMGLHNRYTCPVCSKSICDMSNLWKKLDEEVAAYPMPKMYENKMVWILCNDCGSNTNVRFHLIAHKCSSCGSYNTRQTQRGSDSHSCSSGMPQVVGSTG.

The CHY-type zinc finger occupies 20-96 (IGSGHYGCSH…VQQNCSNCGV (77 aa)). Residues C27, H29, C40, C41, C47, C50, H51, H66, C78, C81, C91, C94, C103, C106, H119, C120, C123, C126, H136, C137, C140, C143, H152, and C154 each contribute to the Zn(2+) site. The CTCHY-type zinc finger occupies 98–162 (MGKYFCSKCK…QCVEGAMHHN (65 aa)). An RING-type; atypical zinc finger spans residues 163-206 (CPVCFEYLFDSTRDITVLRCGHTMHLECTKDMGLHNRYTCPVCS). The residue at position 173 (S173) is a Phosphoserine. A Phosphothreonine modification is found at T178. Phosphoserine is present on S208. The disordered stretch occupies residues 271–291 (QRGSDSHSCSSGMPQVVGSTG).

In terms of assembly, interacts with SRK2D/2SNRK2.2, SRK2I/SNRK2.3 and SRK2E/SNRK2.6. Phosphorylated at Ser-173, Thr-178 and Ser-208 by SRK2E/SNRK2.6 in response to abscisic acid (ABA). Phosphorylation activates its E3 ubiquitin-protein ligase activity. In terms of tissue distribution, expressed in roots, leaves, and anthers and stigma of open flowers.

The protein localises to the nucleus. The protein resides in the cytoplasm. It localises to the endoplasmic reticulum. It catalyses the reaction S-ubiquitinyl-[E2 ubiquitin-conjugating enzyme]-L-cysteine + [acceptor protein]-L-lysine = [E2 ubiquitin-conjugating enzyme]-L-cysteine + N(6)-ubiquitinyl-[acceptor protein]-L-lysine.. It participates in protein modification; protein ubiquitination. In terms of biological role, possesses E3 ubiquitin-protein ligase activity in vitro. Mediates mainly 'Lys-48'-linked polyubiquitination. Promotes abscisic acid (ABA)-induced stomatal closure, reactive oxygen species (ROS) production and drought tolerance. Involved in the regulation of stomatal aperture. The sequence is that of E3 ubiquitin-protein ligase RZFP34 from Arabidopsis thaliana (Mouse-ear cress).